A 275-amino-acid polypeptide reads, in one-letter code: Putative hydro-lyase SPO1111 (275 aa).

This sequence belongs to the D-glutamate cyclase family.

This Ruegeria pomeroyi (strain ATCC 700808 / DSM 15171 / DSS-3) (Silicibacter pomeroyi) protein is Putative hydro-lyase SPO1111.